Consider the following 92-residue polypeptide: Turripeptide UID-02 (92 aa).

Positions Met1 to Ala21 are cleaved as a signal peptide. Residues Thr22–Asn39 constitute a propeptide that is removed on maturation.

Expressed by the venom duct.

Its subcellular location is the secreted. In Gemmula speciosa (Splendid gem-turris), this protein is Turripeptide UID-02.